Here is a 345-residue protein sequence, read N- to C-terminus: Holliday junction branch migration complex subunit RuvB (345 aa).

The interval 4-182 (PDRIVSAVQR…FGIPIRLEFY (179 aa)) is large ATPase domain (RuvB-L). Residues R22, G63, K66, T67, T68, 129 to 131 (EDY), R172, Y182, and R219 contribute to the ATP site. Position 67 (T67) interacts with Mg(2+). The interval 183 to 253 (TVDELQAIVT…IADAALSRLE (71 aa)) is small ATPAse domain (RuvB-S). Positions 256–345 (ALGLDQLDRR…QSQINLFEEE (90 aa)) are head domain (RuvB-H). DNA is bound by residues R292, R311, and R316.

This sequence belongs to the RuvB family. Homohexamer. Forms an RuvA(8)-RuvB(12)-Holliday junction (HJ) complex. HJ DNA is sandwiched between 2 RuvA tetramers; dsDNA enters through RuvA and exits via RuvB. An RuvB hexamer assembles on each DNA strand where it exits the tetramer. Each RuvB hexamer is contacted by two RuvA subunits (via domain III) on 2 adjacent RuvB subunits; this complex drives branch migration. In the full resolvosome a probable DNA-RuvA(4)-RuvB(12)-RuvC(2) complex forms which resolves the HJ.

It is found in the cytoplasm. It carries out the reaction ATP + H2O = ADP + phosphate + H(+). The RuvA-RuvB-RuvC complex processes Holliday junction (HJ) DNA during genetic recombination and DNA repair, while the RuvA-RuvB complex plays an important role in the rescue of blocked DNA replication forks via replication fork reversal (RFR). RuvA specifically binds to HJ cruciform DNA, conferring on it an open structure. The RuvB hexamer acts as an ATP-dependent pump, pulling dsDNA into and through the RuvAB complex. RuvB forms 2 homohexamers on either side of HJ DNA bound by 1 or 2 RuvA tetramers; 4 subunits per hexamer contact DNA at a time. Coordinated motions by a converter formed by DNA-disengaged RuvB subunits stimulates ATP hydrolysis and nucleotide exchange. Immobilization of the converter enables RuvB to convert the ATP-contained energy into a lever motion, pulling 2 nucleotides of DNA out of the RuvA tetramer per ATP hydrolyzed, thus driving DNA branch migration. The RuvB motors rotate together with the DNA substrate, which together with the progressing nucleotide cycle form the mechanistic basis for DNA recombination by continuous HJ branch migration. Branch migration allows RuvC to scan DNA until it finds its consensus sequence, where it cleaves and resolves cruciform DNA. The polypeptide is Holliday junction branch migration complex subunit RuvB (Chelativorans sp. (strain BNC1)).